We begin with the raw amino-acid sequence, 180 residues long: ATP-dependent protease subunit HslV (180 aa).

The active site involves Thr-7. Na(+) contacts are provided by Ala-165, Cys-168, and Thr-171.

The protein belongs to the peptidase T1B family. HslV subfamily. As to quaternary structure, a double ring-shaped homohexamer of HslV is capped on each side by a ring-shaped HslU homohexamer. The assembly of the HslU/HslV complex is dependent on binding of ATP.

Its subcellular location is the cytoplasm. It carries out the reaction ATP-dependent cleavage of peptide bonds with broad specificity.. With respect to regulation, allosterically activated by HslU binding. In terms of biological role, protease subunit of a proteasome-like degradation complex believed to be a general protein degrading machinery. This Geobacillus kaustophilus (strain HTA426) protein is ATP-dependent protease subunit HslV.